The chain runs to 89 residues: Small ribosomal subunit protein uS15 (89 aa).

Residues 1 to 21 (MSIAAERKAEVIKTNARKDGD) are compositionally biased toward basic and acidic residues. Residues 1–24 (MSIAAERKAEVIKTNARKDGDTGS) are disordered.

It belongs to the universal ribosomal protein uS15 family. As to quaternary structure, part of the 30S ribosomal subunit. Forms a bridge to the 50S subunit in the 70S ribosome, contacting the 23S rRNA.

One of the primary rRNA binding proteins, it binds directly to 16S rRNA where it helps nucleate assembly of the platform of the 30S subunit by binding and bridging several RNA helices of the 16S rRNA. Its function is as follows. Forms an intersubunit bridge (bridge B4) with the 23S rRNA of the 50S subunit in the ribosome. The protein is Small ribosomal subunit protein uS15 of Rhodopseudomonas palustris (strain BisA53).